The chain runs to 433 residues: Tol-Pal system protein TolB (433 aa).

The signal sequence occupies residues 1 to 21 (MRNLLRGMLVVICCMAGIAAA).

It belongs to the TolB family. The Tol-Pal system is composed of five core proteins: the inner membrane proteins TolA, TolQ and TolR, the periplasmic protein TolB and the outer membrane protein Pal. They form a network linking the inner and outer membranes and the peptidoglycan layer.

The protein localises to the periplasm. In terms of biological role, part of the Tol-Pal system, which plays a role in outer membrane invagination during cell division and is important for maintaining outer membrane integrity. This Pseudomonas fluorescens (strain SBW25) protein is Tol-Pal system protein TolB.